A 353-amino-acid polypeptide reads, in one-letter code: UDP-N-acetylglucosamine--N-acetylmuramyl-(pentapeptide) pyrophosphoryl-undecaprenol N-acetylglucosamine transferase (353 aa).

UDP-N-acetyl-alpha-D-glucosamine-binding positions include 10–12, Asn-124, Ser-183, and Gln-283; that span reads TGG.

It belongs to the glycosyltransferase 28 family. MurG subfamily.

The protein resides in the cell inner membrane. It carries out the reaction di-trans,octa-cis-undecaprenyl diphospho-N-acetyl-alpha-D-muramoyl-L-alanyl-D-glutamyl-meso-2,6-diaminopimeloyl-D-alanyl-D-alanine + UDP-N-acetyl-alpha-D-glucosamine = di-trans,octa-cis-undecaprenyl diphospho-[N-acetyl-alpha-D-glucosaminyl-(1-&gt;4)]-N-acetyl-alpha-D-muramoyl-L-alanyl-D-glutamyl-meso-2,6-diaminopimeloyl-D-alanyl-D-alanine + UDP + H(+). The protein operates within cell wall biogenesis; peptidoglycan biosynthesis. Its function is as follows. Cell wall formation. Catalyzes the transfer of a GlcNAc subunit on undecaprenyl-pyrophosphoryl-MurNAc-pentapeptide (lipid intermediate I) to form undecaprenyl-pyrophosphoryl-MurNAc-(pentapeptide)GlcNAc (lipid intermediate II). The protein is UDP-N-acetylglucosamine--N-acetylmuramyl-(pentapeptide) pyrophosphoryl-undecaprenol N-acetylglucosamine transferase of Helicobacter pylori (strain Shi470).